A 792-amino-acid polypeptide reads, in one-letter code: Ribosome biogenesis protein BOP1 homolog (792 aa).

A compositionally biased stretch (basic residues) spans 1–11 (MTKKRTVKRKV). Positions 1-167 (MTKKRTVKRK…ESDTSDEEDI (167 aa)) are disordered. Acidic residues-rich tracts occupy residues 44–53 (EDTTDDEGID), 60–72 (SSED…DEEG), 82–117 (EAEE…ESDA), and 157–166 (EESDTSDEED). WD repeat units follow at residues 453–494 (GHTD…RTIE), 496–534 (NDVV…KLLI), 578–620 (THFK…SQIP), 623–661 (KSKG…LIKK), 664–703 (TNSK…KPYQ), 707–746 (LHRN…DLLQ), and 762–792 (RDEF…RLYT).

It belongs to the WD repeat BOP1/ERB1 family.

The protein localises to the nucleus. It is found in the nucleolus. The protein resides in the nucleoplasm. In terms of biological role, required for maturation of ribosomal RNAs and formation of the large ribosomal subunit. The polypeptide is Ribosome biogenesis protein BOP1 homolog (Drosophila mojavensis (Fruit fly)).